Consider the following 535-residue polypeptide: Alkaline phosphatase, placental type (535 aa).

A signal peptide spans 1–22 (MLGPCMLLLLLLLGLRLQLSLG). Residue Asp64 participates in Mg(2+) binding. Asp64 and Ser114 together coordinate Zn(2+). Ser114 acts as the Phosphoserine intermediate in catalysis. Residues Cys143 and Cys205 are joined by a disulfide bond. N-linked (GlcNAc...) asparagine glycosylation is present at Asn144. A Mg(2+)-binding site is contributed by Ser177. Glu238 is a binding site for Ca(2+). Residue Asn271 is glycosylated (N-linked (GlcNAc...) asparagine). Ca(2+) is bound by residues Phe291, Glu292, and Asp307. Position 333 (Glu333) interacts with Mg(2+). Zn(2+)-binding residues include Asp338, His342, Asp379, and His380. The tract at residues 425-449 (DGARPDVTESESGSPEYRQQSAVPL) is disordered. A compositionally biased stretch (polar residues) spans 434-446 (SESGSPEYRQQSA). Residue His454 coordinates Zn(2+). Cys489 and Cys496 form a disulfide bridge. Asp506 carries the GPI-anchor amidated aspartate lipid modification. The propeptide at 507 to 535 (AAHPGRSVVPALLPLLAGTLLLLETATAP) is removed in mature form. Residues 513-529 (SVVPALLPLLAGTLLLL) form a helical membrane-spanning segment.

It belongs to the alkaline phosphatase family. Homodimer. Mg(2+) serves as cofactor. It depends on Zn(2+) as a cofactor. Ca(2+) is required as a cofactor. In terms of tissue distribution, detected in placenta (at protein level).

The protein resides in the cell membrane. The catalysed reaction is a phosphate monoester + H2O = an alcohol + phosphate. In terms of biological role, alkaline phosphatase that can hydrolyze various phosphate compounds. The chain is Alkaline phosphatase, placental type from Homo sapiens (Human).